A 294-amino-acid chain; its full sequence is Epimerase family protein SDR39U1 (294 aa).

Residues 31–32 (SR), 58–59 (LA), E77, R82, and V160 contribute to the NADP(+) site.

This sequence belongs to the NAD(P)-dependent epimerase/dehydratase family. SDR39U1 subfamily.

Functionally, putative NADP-dependent oxidoreductase. The sequence is that of Epimerase family protein SDR39U1 (SDR39U1) from Bos taurus (Bovine).